A 156-amino-acid polypeptide reads, in one-letter code: MPRRGAVPKREAVADPVYGSKMLTKLINQVMLDGKRSVAEAICYGALDIVRRKTGREPLEVLEQAMKNVMPIVETRPRRVGGANYQVPVEVRADRRQTLGVRWITSFARQRPGKSMKEKLAAEIMDAANGVGGAVKKKEDTHRMAEANKAFAHYRW.

The protein belongs to the universal ribosomal protein uS7 family. In terms of assembly, part of the 30S ribosomal subunit. Contacts proteins S9 and S11.

One of the primary rRNA binding proteins, it binds directly to 16S rRNA where it nucleates assembly of the head domain of the 30S subunit. Is located at the subunit interface close to the decoding center, probably blocks exit of the E-site tRNA. This Desulforudis audaxviator (strain MP104C) protein is Small ribosomal subunit protein uS7.